The chain runs to 389 residues: MVTVSEIRKAQRAEGPATILAIGTANPANCVEQSTYPDFYFKITNSEHKTVLKEKFQRMCDKSMIKRRYMYLTEDILKENPSLCEYMAPSLDARQDMVVVEVPRLGKEAAVKAIKEWGQPKSKITHLIFCTTSGVDMPGADYQLTKLLGLRPYVKRYMMYQQGCFAGGTVFRLAKDLAENNKNARVLVVCSEVTAVTFRGPSDTHLDSLVGQALFGDGAAALIVGSDPVPEIEKPIFEMVWTAQTIAPDSEGAIDGHLREAGLTFHLLKDVPGIVSKNIDKALVEAFKPLGISDYNSIFWIAHPGGPAILDQVEQKLALKPEKMRATREVLSEYGNMSSACVLFILDEMRKKSTQDGLNTTGEGLEWGVLFGFGPGLTIETVVLRSVAI.

Cys164 is an active-site residue.

This sequence belongs to the thiolase-like superfamily. Chalcone/stilbene synthases family.

It catalyses the reaction (E)-4-coumaroyl-CoA + 3 malonyl-CoA + 3 H(+) = 2',4,4',6'-tetrahydroxychalcone + 3 CO2 + 4 CoA. Its pathway is secondary metabolite biosynthesis; flavonoid biosynthesis. The primary product of this enzyme is 4,2',4',6'-tetrahydroxychalcone (also termed naringenin-chalcone or chalcone) which can under specific conditions spontaneously isomerize into naringenin. The chain is Chalcone synthase 2 (CHS2) from Pisum sativum (Garden pea).